Reading from the N-terminus, the 78-residue chain is MSAYCQVTGRKPGFGKQVSHSHRHTSRRWNPNVQRRKFYLPSEGRTITLTVSPKGLKTIDRDGIESVVAKIRARGEKI.

The disordered stretch occupies residues 1-28 (MSAYCQVTGRKPGFGKQVSHSHRHTSRR).

It belongs to the bacterial ribosomal protein bL28 family.

In Corynebacterium urealyticum (strain ATCC 43042 / DSM 7109), this protein is Large ribosomal subunit protein bL28.